Consider the following 232-residue polypeptide: Phosphatidylserine decarboxylase proenzyme (232 aa).

The active-site Schiff-base intermediate with substrate; via pyruvic acid is the S190. Pyruvic acid (Ser); by autocatalysis is present on S190.

The protein belongs to the phosphatidylserine decarboxylase family. PSD-A subfamily. As to quaternary structure, heterodimer of a large membrane-associated beta subunit and a small pyruvoyl-containing alpha subunit. It depends on pyruvate as a cofactor. Post-translationally, is synthesized initially as an inactive proenzyme. Formation of the active enzyme involves a self-maturation process in which the active site pyruvoyl group is generated from an internal serine residue via an autocatalytic post-translational modification. Two non-identical subunits are generated from the proenzyme in this reaction, and the pyruvate is formed at the N-terminus of the alpha chain, which is derived from the carboxyl end of the proenzyme. The post-translation cleavage follows an unusual pathway, termed non-hydrolytic serinolysis, in which the side chain hydroxyl group of the serine supplies its oxygen atom to form the C-terminus of the beta chain, while the remainder of the serine residue undergoes an oxidative deamination to produce ammonia and the pyruvoyl prosthetic group on the alpha chain.

The protein localises to the cell membrane. The catalysed reaction is a 1,2-diacyl-sn-glycero-3-phospho-L-serine + H(+) = a 1,2-diacyl-sn-glycero-3-phosphoethanolamine + CO2. Its pathway is phospholipid metabolism; phosphatidylethanolamine biosynthesis; phosphatidylethanolamine from CDP-diacylglycerol: step 2/2. In terms of biological role, catalyzes the formation of phosphatidylethanolamine (PtdEtn) from phosphatidylserine (PtdSer). This is Phosphatidylserine decarboxylase proenzyme from Bradyrhizobium diazoefficiens (strain JCM 10833 / BCRC 13528 / IAM 13628 / NBRC 14792 / USDA 110).